The chain runs to 140 residues: Large ribosomal subunit protein bL17 (140 aa).

This sequence belongs to the bacterial ribosomal protein bL17 family. In terms of assembly, part of the 50S ribosomal subunit. Contacts protein L32.

The polypeptide is Large ribosomal subunit protein bL17 (Rhizobium leguminosarum bv. trifolii (strain WSM2304)).